Here is a 101-residue protein sequence, read N- to C-terminus: Citrate lyase acyl carrier protein (101 aa).

Serine 14 bears the O-(phosphoribosyl dephospho-coenzyme A)serine mark.

Belongs to the CitD family. In terms of assembly, oligomer with a subunit composition of (alpha,beta,gamma)6.

It is found in the cytoplasm. Functionally, covalent carrier of the coenzyme of citrate lyase. This Latilactobacillus sakei subsp. sakei (strain 23K) (Lactobacillus sakei subsp. sakei) protein is Citrate lyase acyl carrier protein.